Here is a 124-residue protein sequence, read N- to C-terminus: Small ribosomal subunit protein uS12c (124 aa).

The interval 1 to 28 is disordered; sequence MPTFQQLVRSARKPHAKKTKSPALQGCP. The span at 10–20 shows a compositional bias: basic residues; sequence SARKPHAKKTK.

The protein belongs to the universal ribosomal protein uS12 family. Part of the 30S ribosomal subunit.

Its subcellular location is the plastid. Its function is as follows. With S4 and S5 plays an important role in translational accuracy. Located at the interface of the 30S and 50S subunits. The sequence is that of Small ribosomal subunit protein uS12c (rps12) from Prototheca wickerhamii.